Consider the following 131-residue polypeptide: UPF0102 protein RALTA_A3032 (131 aa).

Residues Met-1 to Ser-12 show a composition bias toward polar residues. The tract at residues Met-1–Glu-21 is disordered.

It belongs to the UPF0102 family.

The protein is UPF0102 protein RALTA_A3032 of Cupriavidus taiwanensis (strain DSM 17343 / BCRC 17206 / CCUG 44338 / CIP 107171 / LMG 19424 / R1) (Ralstonia taiwanensis (strain LMG 19424)).